The chain runs to 81 residues: MRLSYISLTLAIIFVMAIVHAPETEAKAYPEADAVAEAIAVGEADAVGVADPGIKDALAKIWKILKAEVPTVAAAIENKVG.

Positions 1–26 are cleaved as a signal peptide; sequence MRLSYISLTLAIIFVMAIVHAPETEA. Positions 27 to 52 are excised as a propeptide; it reads KAYPEADAVAEAIAVGEADAVGVADP. Position 80 is a valine amide (valine 80).

It belongs to the formicidae venom precursor-01 superfamily. As to expression, expressed by the venom gland.

The protein localises to the secreted. Functionally, induces paralysis after injection into blowflies (L.caesar), and then death within 24 hours. May have antimicrobial properties, like most ant linear peptides. In Manica rubida (European giant red ant), this protein is U10-myrmicitoxin-Mri1b.